A 522-amino-acid polypeptide reads, in one-letter code: MKKSNLSQYKKNDKNKVEVTKILTRIEGFDDISHGGIPLGRTTLVSGTSGTGKTMFAIQFLYHGIVHFDDPAVFVTFEESPKDIIQNALSFGWDLQQLMDDGKLFILDASPDPEGQDIAGEFDLSALIERIQYAISKYQAKRVGIDSVTAIFQQYDAATVVRREIFRLTARLKQIGVTTVMTTERVDEYGPVARYGVEEFVSDNVVIVRNVLEGERRRRTLEILKLRGTSHMKGEYPFTITDDGINIFPLGAMRLTQRSSNARVSSGVQTLDEMCGGGFFKDSIILVTGATGTGKTLLVSKFLEDACKNGDRAILFAYEESRAQLSRNAYSWGIDFEEMEQKGLLKILCTYPESAGLEDHLQQIKSEIAEFKPSRISIDSLSALARGVSNNAFRQFVIGVTGFAKQEEITGFFTNTTDHFLGSHSITESHISTITDTILMLQYVEILGEMSRAINVFKMRGSWHDKGIREYSISQHGPEIKNAFHNFEGIISGTPTRVSLDEKRDLSRIVQDVKGLSDDDLL.

KaiC domains lie at 1 to 248 (MKKS…INIF) and 262 to 522 (ARVS…DDLL). ATP is bound by residues glycine 50, threonine 51, glycine 52, lysine 53, threonine 54, serine 90, lysine 225, leucine 226, arginine 227, threonine 229, histidine 231, threonine 241, aspartate 242, threonine 291, glycine 292, threonine 293, glycine 294, lysine 295, threonine 296, and leucine 297. Threonine 54 provides a ligand contact to Mg(2+). A Mg(2+)-binding site is contributed by threonine 296. Residue glutamate 319 participates in Mg(2+) binding. An ATP-binding site is contributed by tryptophan 332. Serine 432 bears the Phosphoserine; by autocatalysis mark. Threonine 433 is subject to Phosphothreonine; by autocatalysis. Arginine 452, lysine 458, methionine 459, arginine 460, serine 462, histidine 464, and lysine 466 together coordinate ATP.

It belongs to the KaiC family. As to quaternary structure, homohexamer; hexamerization is dependent on ATP-binding. The KaiABC complex composition changes during the circadian cycle to control KaiC phosphorylation. Complexes KaiC(6), KaiA(2-4):KaiC(6), KaiB(6):KaiC(6) and KaiC(6):KaiB(6):KaiA(12) are among the most important forms, many form cooperatively. KaiC interacts with SasA, activating its autokinase function and leading to RpaA activation. Requires Mg(2+) as cofactor. Post-translationally, phosphorylated on serine and threonine residues by autocatalysis. Has a 4 step phosphorylation cycle; the autokinase acts first on Thr-433, then Ser-432. When Ser-432 is modified KaiC switches to an autophosphatase mode, acting first on phospho-Thr-433 then phospho-Ser-432.

The catalysed reaction is L-seryl-[protein] + ATP = O-phospho-L-seryl-[protein] + ADP + H(+). It catalyses the reaction L-threonyl-[protein] + ATP = O-phospho-L-threonyl-[protein] + ADP + H(+). It carries out the reaction ATP + H2O = ADP + phosphate + H(+). Its activity is regulated as follows. The interaction with KaiA enhances its phosphorylation status, while the interaction with KaiB decreases it. Its function is as follows. Central component of the KaiABC oscillator complex, which constitutes the main circadian regulator in cyanobacteria. Complex composition changes during the circadian cycle to control KaiC phosphorylation. KaiA stimulates KaiC autophosphorylation, while KaiB sequesters KaiA, leading to KaiC autodephosphorylation. Clock output pathways impact the RpaA transcriptional regulator. KaiC enhances the autophosphorylation activity of SasA, which then transfers its phosphate group to RpaA to activate it. KaiB and KaiC together enhance the phospho-RpaA dephosphatase activity of CikA. In terms of biological role, has a weak, temperature-independent ATPase activity; ATPase activity defines the circadian period. The phosphorylation state of KaiC modulates its ATPase activity and effects KaiB binding. This chain is Circadian clock oscillator protein KaiC, found in Acaryochloris marina (strain MBIC 11017).